The following is an 84-amino-acid chain: MRIDKFLQSVGLVKRRVLATDMCNVGAVWLNGSCAKASKEVKAGDTISLHYLKGIEEYTILQIPALKNVPRKDTHLYIAPKTKE.

One can recognise an S4 RNA-binding domain in the interval 1–64 (MRIDKFLQSV…IEEYTILQIP (64 aa)).

The protein belongs to the RqcP family. In terms of assembly, associates with stalled 50S ribosomal subunits. Binds to RqcH, 23S rRNA and the P-site tRNA. Does not require RqcH for association with 50S subunits.

Its function is as follows. Key component of the ribosome quality control system (RQC), a ribosome-associated complex that mediates the extraction of incompletely synthesized nascent chains from stalled ribosomes and their subsequent degradation. RqcH recruits Ala-charged tRNA, and with RqcP directs the elongation of stalled nascent chains on 50S ribosomal subunits, leading to non-templated C-terminal alanine extensions (Ala tail). The Ala tail promotes nascent chain degradation. RqcP is associated with the translocation-like movement of the peptidyl-tRNA from the A-site into the P-site. The protein is RQC P-site tRNA stabilizing factor of Helicobacter pylori (strain ATCC 700392 / 26695) (Campylobacter pylori).